A 525-amino-acid chain; its full sequence is MDLAVGPGAAGPSNVPAFLTKLWTLVSDPDTDALICWSPSGNSFHVFDQGQFAKEVLPKYFKHNNMASFVRQLNMYGFRKVVHIEQGGLVKPERDDTEFQHPCFLRGQEQLLENIKRKVTSVSTLKSEDIKIRQDSVTRLLTDVQLMKGKQECMDSKLLAMKHENEALWREVASLRQKHAQQQKVVNKLIQFLISLVQSNRILGVKRKIPLMLSDSNSAHSVPKYGRQYSLEHVHGPGPYSAPSPAYSSSSLYSSDAVTSSGPIISDITELAPTSPLASPGRSIDERPLSSSTLVRVKQEPPSPPHSPRVLEASPGRPSSMDTPLSPTAFIDSILRESEPTPAASNTAPMDTTGAQAPALPTPSTPEKCLSVACLDKNELSDHLDAMDSNLDNLQTMLTSHGFSVDTSALLDLFSPSVTMPDMSLPDLDSSLASIQELLSPQEPPRPIEAENSNPDSGKQLVHYTAQPLFLLDPDAVDTGSSELPVLFELGESSYFSEGDDYTDDPTISLLTGTEPHKAKDPTVS.

Position 1 is an N-acetylmethionine (Met-1). The segment at 15-120 (VPAFLTKLWT…LLENIKRKVT (106 aa)) is DNA-binding domain. Lys-80 bears the N6-acetyllysine mark. Lys-91 carries the N6-acetyllysine; alternate modification. Lys-91 participates in a covalent cross-link: Glycyl lysine isopeptide (Lys-Gly) (interchain with G-Cter in SUMO2); alternate. Lys-118 bears the N6-acetyllysine mark. Position 121 is a phosphoserine; by MAPKAPK2 (Ser-121). Residues Lys-126 and Lys-131 each participate in a glycyl lysine isopeptide (Lys-Gly) (interchain with G-Cter in SUMO2) cross-link. A hydrophobic repeat HR-A/B region spans residues 130–203 (IKIRQDSVTR…ISLVQSNRIL (74 aa)). Residue Thr-142 is modified to Phosphothreonine; by CK2. N6-acetyllysine is present on residues Lys-150 and Lys-188. Positions 203 to 224 (LGVKRKIPLMLSDSNSAHSVPK) are d domain. Position 208 is an N6-acetyllysine; alternate (Lys-208). Lys-208 participates in a covalent cross-link: Glycyl lysine isopeptide (Lys-Gly) (interchain with G-Cter in SUMO2); alternate. Phosphoserine; by PLK1 is present on Ser-216. The regulatory domain stretch occupies residues 221 to 310 (SVPKYGRQYS…PPSPPHSPRV (90 aa)). Residue Lys-224 forms a Glycyl lysine isopeptide (Lys-Gly) (interchain with G-Cter in SUMO2) linkage. At Ser-230 the chain carries Phosphoserine; by CAMK2A. Disordered regions lie at residues 272 to 327 (APTS…PLSP) and 340 to 365 (PTPAASNTAPMDTTGAQAPALPTPST). 2 positions are modified to phosphoserine: Ser-275 and Ser-292. Lys-298 is modified (N6-acetyllysine; alternate). Lys-298 is covalently cross-linked (Glycyl lysine isopeptide (Lys-Gly) (interchain with G-Cter in SUMO2); alternate). A Glycyl lysine isopeptide (Lys-Gly) (interchain with G-Cter in SUMO); alternate cross-link involves residue Lys-298. Phosphoserine is present on residues Ser-303, Ser-307, Ser-314, and Ser-319. Residue Ser-320 is modified to Phosphoserine; by PKA. Thr-323 carries the phosphothreonine modification. Phosphoserine; by MAPK12 is present on Ser-326. The span at 343–355 (AASNTAPMDTTGA) shows a compositional bias: polar residues. A Phosphoserine modification is found at Ser-345. The tract at residues 367 to 525 (EKCLSVACLD…PHKAKDPTVS (159 aa)) is transactivation domain. The interval 380–405 (LSDHLDAMDSNLDNLQTMLTSHGFSV) is hydrophobic repeat HR-C. The 9aaTAD motif lies at 408–416 (SALLDLFSP). Phosphoserine; by PLK1 is present on Ser-415. Ser-440 is subject to Phosphoserine. 2 disordered regions span residues 441-460 (PQEPPRPIEAENSNPDSGKQ) and 495-525 (YFSEGDDYTDDPTISLLTGTEPHKAKDPTVS). Basic and acidic residues predominate over residues 515–525 (EPHKAKDPTVS). Position 520 is an N6-acetyllysine (Lys-520).

It belongs to the HSF family. In terms of assembly, monomer; cytoplasmic latent and transcriptionally inactive monomeric form in unstressed cells. Homotrimer; in response to stress, such as heat shock, homotrimerizes and translocates into the nucleus, binds to heat shock element (HSE) sequences in promoter of heat shock protein (HSP) genes and acquires transcriptional ability. Interacts (via monomeric form) with FKBP4; this interaction occurs in unstressed cells. Associates (via monomeric form) with HSP90 proteins in a multichaperone complex in unnstressed cell; this association maintains HSF1 in a non-DNA-binding and transcriptional inactive form by preventing HSF1 homotrimerization. Homotrimeric transactivation activity is modulated by protein-protein interactions and post-translational modifications. Interacts with HSP90AA1; this interaction is decreased in a IER5-dependent manner, promoting HSF1 accumulation in the nucleus, homotrimerization and DNA-binding activities. Part (via regulatory domain in the homotrimeric form) of a large heat shock-induced HSP90-dependent multichaperone complex at least composed of FKBP4, FKBP5, HSP90 proteins, PPID, PPP5C and PTGES3; this association maintains the HSF1 homotrimeric DNA-bound form in a transcriptionally inactive form. Interacts with BAG3 (via BAG domain); this interaction occurs in normal and heat-shocked cells promoting nuclear shuttling of HSF1 in a BAG3-dependent manner. Interacts (via homotrimeric and hyperphosphorylated form) with FKBP4; this interaction occurs upon heat shock in a HSP90-dependent multichaperone complex. Interacts (via homotrimeric form preferentially) with EEF1A proteins. In heat shocked cells, stress-denatured proteins compete with HSF1 homotrimeric DNA-bound form for association of the HSP90-dependent multichaperone complex, and hence alleviating repression of HSF1-mediated transcriptional activity. Interacts (via homotrimeric form preferentially) with DAXX; this interaction relieves homotrimeric HSF1 from repression of its transcriptional activity by HSP90-dependent multichaperone complex upon heat shock. Interacts (via D domain and preferentially with hyperphosphorylated form) with JNK1; this interaction occurs under both normal growth conditions and immediately upon heat shock. Interacts (via D domain and preferentially with hyperphosphorylated form) with MAPK3; this interaction occurs upon heat shock. Interacts with IER5 (via central region); this interaction promotes PPP2CA-induced dephosphorylation on Ser-121, Ser-307, Ser-314 and Thr-323 and HSF1 transactivation activity. Found in a ribonucleoprotein complex composed of the HSF1 homotrimeric form, translation elongation factor eEF1A proteins and non-coding RNA heat shock RNA-1 (HSR1); this complex occurs upon heat shock and stimulates HSF1 DNA-binding activity. Interacts (via transactivation domain) with HSPA1A/HSP70 and DNAJB1; these interactions result in the inhibition of heat shock- and HSF1-induced transcriptional activity during the attenuation and recovery phase from heat shock. Interacts (via Ser-303 and Ser-307 phosphorylated form) with YWHAE; this interaction promotes HSF1 sequestration in the cytoplasm in an ERK-dependent manner. Found in a complex with IER5 and PPP2CA. Interacts with TPR; this interaction increases upon heat shock and stimulates export of HSP70 mRNA. Interacts with SYMPK (via N-terminus) and CSTF2; these interactions occur upon heat shock. Interacts (via transactivation domain) with HSPA8. Interacts with EEF1D; this interaction occurs at heat shock promoter element (HSE) sequences. Interacts with MAPKAPK2. Interacts with PRKACA/PKA. Interacts (via transactivation domain) with GTF2A2. Interacts (via transactivation domain) with GTF2B. Interacts (via transactivation domain) with TBP. Interacts with CDK9, CCNT1 and EP300. Interacts (via N-terminus) with XRCC5 (via N-terminus) and XRCC6 (via N-terminus); these interactions are direct and prevent XRCC5/XRCC6 heterodimeric binding and non-homologous end joining (NHEJ) repair activities induced by ionizing radiation (IR). Interacts with PLK1; this interaction occurs during the early mitotic period, increases upon heat shock but does not modulate neither HSF1 homotrimerization and DNA-binding activities. Interacts (via Ser-216 phosphorylated form) with CDC20; this interaction occurs in mitosis in a MAD2L1-dependent manner and prevents PLK1-stimulated degradation of HSF1 by blocking the recruitment of the SCF(BTRC) ubiquitin ligase complex. Interacts with MAD2L1; this interaction occurs in mitosis. Interacts with BTRC; this interaction occurs during mitosis, induces its ubiquitin-dependent degradation following stimulus-dependent phosphorylation at Ser-216, a process inhibited by CDC20. Interacts with HSP90AA1 and HSP90AB1. Forms a complex with TTC5/STRAP and p300/EP300; these interactions augment chromatin-bound HSF1 and p300/EP300 histone acetyltransferase activity. Post-translationally, phosphorylated. Phosphorylated in unstressed cells; this phosphorylation is constitutive and implicated in the repression of HSF1 transcriptional activity. Phosphorylated on Ser-121 by MAPKAPK2; this phosphorylation promotes interaction with HSP90 proteins and inhibits HSF1 homotrimerization, DNA-binding and transactivation activities. Phosphorylation on Ser-303 by GSK3B/GSK3-beat and on Ser-307 by MAPK3 within the regulatory domain is involved in the repression of HSF1 transcriptional activity and occurs in a RAF1-dependent manner. Phosphorylation on Ser-303 and Ser-307 increases HSF1 nuclear export in a YWHAE- and XPO1/CRM1-dependent manner. Phosphorylation on Ser-307 is a prerequisite for phosphorylation on Ser-303. According to, Ser-303 is not phosphorylated in unstressed cells. Phosphorylated on Ser-415 by PLK1; phosphorylation promotes nuclear translocation upon heat shock. Hyperphosphorylated upon heat shock and during the attenuation and recovery phase period of the heat shock response. Phosphorylated on Thr-142; this phosphorylation increases HSF1 transactivation activity upon heat shock. Phosphorylation on Ser-230 by CAMK2A; this phosphorylation enhances HSF1 transactivation activity upon heat shock. Phosphorylation on Ser-326 by MAPK12; this phosphorylation enhances HSF1 nuclear translocation, homotrimerization and transactivation activities upon heat shock. Phosphorylated on Ser-320 by PRKACA/PKA; this phosphorylation promotes nuclear localization and transcriptional activity upon heat shock. Phosphorylated by MAPK8; this phosphorylation occurs upon heat shock, induces HSF1 translocation into nuclear stress bodies and negatively regulates transactivation activity. Neither basal nor stress-inducible phosphorylation on Ser-230, Ser-292, Ser-303, Ser-307, Ser-314, Ser-319, Ser-320, Thr-323, Ser-326, Ser-338, Ser-345, Ser-364 and Thr-365 within the regulatory domain is involved in the regulation of HSF1 subcellular localization or DNA-binding activity; however, it negatively regulates HSF1 transactivation activity. Phosphorylated on Ser-216 by PLK1 in the early mitotic period; this phosphorylation regulates HSF1 localization to the spindle pole, the recruitment of the SCF(BTRC) ubiquitin ligase complex inducing HSF1 degradation, and hence mitotic progression. Dephosphorylated on Ser-121, Ser-307, Ser-314 and Thr-323 by phosphatase PPP2CA in an IER5-dependent manner, leading to HSF1-mediated transactivation activity. Sumoylated with SUMO1 and SUMO2 upon heat shock in a ERK2-dependent manner. Sumoylated by SUMO1 on Lys-298; sumoylation occurs upon heat shock and promotes its localization to nuclear stress bodies and DNA-binding activity. Phosphorylation on Ser-303 and Ser-307 is probably a prerequisite for sumoylation. In terms of processing, acetylated on Lys-118; this acetylation is decreased in a IER5-dependent manner. Acetylated on Lys-118, Lys-208 and Lys-298; these acetylations occur in a EP300-dependent manner. Acetylated on Lys-80; this acetylation inhibits DNA-binding activity upon heat shock. Deacetylated on Lys-80 by SIRT1; this deacetylation increases DNA-binding activity. Post-translationally, ubiquitinated by SCF(BTRC) and degraded following stimulus-dependent phosphorylation at Ser-216 by PLK1 in mitosis. Polyubiquitinated. Undergoes proteasomal degradation upon heat shock and during the attenuation and recovery phase period of the heat shock response.

The protein localises to the nucleus. The protein resides in the cytoplasm. Its subcellular location is the nucleoplasm. It localises to the perinuclear region. It is found in the cytoskeleton. The protein localises to the spindle pole. The protein resides in the microtubule organizing center. Its subcellular location is the centrosome. It localises to the chromosome. It is found in the centromere. The protein localises to the kinetochore. Its function is as follows. Functions as a stress-inducible and DNA-binding transcription factor that plays a central role in the transcriptional activation of the heat shock response (HSR), leading to the expression of a large class of molecular chaperones, heat shock proteins (HSPs), that protect cells from cellular insult damage. In unstressed cells, is present in a HSP90-containing multichaperone complex that maintains it in a non-DNA-binding inactivated monomeric form. Upon exposure to heat and other stress stimuli, undergoes homotrimerization and activates HSP gene transcription through binding to site-specific heat shock elements (HSEs) present in the promoter regions of HSP genes. Upon heat shock stress, forms a chromatin-associated complex with TTC5/STRAP and p300/EP300 to stimulate HSR transcription, therefore increasing cell survival. Activation is reversible, and during the attenuation and recovery phase period of the HSR, returns to its unactivated form. Binds to inverted 5'-NGAAN-3' pentamer DNA sequences. Binds to chromatin at heat shock gene promoters. Activates transcription of transcription factor FOXR1 which in turn activates transcription of the heat shock chaperones HSPA1A and HSPA6 and the antioxidant NADPH-dependent reductase DHRS2. Binds the promoter region upstream of exon 1 of Mpv17l to activate expression of the M-LPS isoform which is involved in metabolism of reactive oxygen species. Also serves several other functions independently of its transcriptional activity. Involved in the repression of Ras-induced transcriptional activation of the c-fos gene in heat-stressed cells. Positively regulates pre-mRNA 3'-end processing and polyadenylation of HSP70 mRNA upon heat-stressed cells in a symplekin (SYMPK)-dependent manner. Plays a role in nuclear export of stress-induced HSP70 mRNA. Plays a role in the regulation of mitotic progression. Also plays a role as a negative regulator of non-homologous end joining (NHEJ) repair activity in a DNA damage-dependent manner. Involved in stress-induced cancer cell proliferation in a IER5-dependent manner. This chain is Heat shock factor protein 1, found in Mus musculus (Mouse).